The sequence spans 353 residues: Rhodopsin (353 aa).

Residues M1 to A36 lie on the Extracellular side of the membrane. 2 N-linked (GlcNAc...) asparagine glycosylation sites follow: N2 and N15. The chain crosses the membrane as a helical span at residues Y37 to V61. Residues T62–N73 lie on the Cytoplasmic side of the membrane. A helical transmembrane segment spans residues Y74 to Y96. Residues T97 to C110 are Extracellular-facing. Cysteines 110 and 187 form a disulfide. A helical membrane pass occupies residues N111 to V133. The 'Ionic lock' involved in activated form stabilization signature appears at E134 to W136. Over E134–H152 the chain is Cytoplasmic. Residues A153–V173 traverse the membrane as a helical segment. Over G174 to S202 the chain is Extracellular. A glycan (N-linked (GlcNAc...) asparagine) is linked at N200. The helical transmembrane segment at F203–G224 threads the bilayer. The Cytoplasmic portion of the chain corresponds to R225 to R252. Residues M253 to Y274 traverse the membrane as a helical segment. Over I275 to V286 the chain is Extracellular. The chain crosses the membrane as a helical span at residues F287–L308. At K296 the chain carries N6-(retinylidene)lysine. Residues M309 to A353 lie on the Cytoplasmic side of the membrane. Residues C322 and C323 are each lipidated (S-palmitoyl cysteine). The segment at E331 to A353 is disordered. Over residues A334 to A353 the composition is skewed to low complexity.

Belongs to the G-protein coupled receptor 1 family. Opsin subfamily. Phosphorylated on some or all of the serine and threonine residues present in the C-terminal region. Post-translationally, contains one covalently linked retinal chromophore.

It localises to the membrane. It is found in the cell projection. The protein localises to the cilium. The protein resides in the photoreceptor outer segment. Functionally, photoreceptor required for image-forming vision at low light intensity. While most salt water fish species use retinal as chromophore, most freshwater fish use 3-dehydroretinal, or a mixture of retinal and 3-dehydroretinal. Light-induced isomerization of 11-cis to all-trans retinal triggers a conformational change that activates signaling via G-proteins. Subsequent receptor phosphorylation mediates displacement of the bound G-protein alpha subunit by arrestin and terminates signaling. In Dicentrarchus labrax (European seabass), this protein is Rhodopsin (rho).